We begin with the raw amino-acid sequence, 47 residues long: PhoP/PhoQ regulator MgrB (47 aa).

The chain crosses the membrane as a helical span at residues 6–26 (WAILLAVLVACLLLWMQTLNV).

Belongs to the MgrB family. As to quaternary structure, may form homooligomers. Probably interacts with the periplasmic domain of PhoQ.

It localises to the cell inner membrane. PhoP-regulated transcription is redox-sensitive, being activated when the periplasm becomes more reducing. MgrB acts between DsbA/DsbB and PhoP/PhoQ in this pathway. Represses PhoP/PhoQ signaling, possibly by binding to the periplasmic domain of PhoQ, altering its activity and that of downstream effector PhoP. This chain is PhoP/PhoQ regulator MgrB, found in Cronobacter sakazakii (strain ATCC BAA-894) (Enterobacter sakazakii).